The chain runs to 597 residues: Kelch-like protein 21 (597 aa).

Residues 35–103 enclose the BTB domain; sequence LDVTLEAAGG…SYTGRVAVSG (69 aa). Residues 138–239 form the BACK domain; the sequence is CLDMQDFAEA…RRFYLLAHVE (102 aa). Kelch repeat units lie at residues 287–335, 336–382, 384–422, 424–463, 464–512, and 513–560; these read ILVL…ALGN, DIYV…VLDG, LYVVAADSTERYDHTTDSWEALQPMTYPMDNCSTTACRG, LYAIGSLAGKETMVMQCYHPDMDLWSLVDCGQLPPWSFAP, KTVT…VLGG, and KLYV…SIFR. The segment at 570–597 is disordered; that stretch reads GRGFELDGGSSDMDVGQPRPPQNPAELH. Residues 587–597 show a composition bias toward pro residues; the sequence is PRPPQNPAELH.

As to quaternary structure, component of the BCR(KLHL21) E3 ubiquitin ligase complex, at least composed of CUL3, KLHL21 and RBX1.

It localises to the cytoplasm. Its subcellular location is the cytoskeleton. The protein resides in the spindle. It functions in the pathway protein modification; protein ubiquitination. Substrate-specific adapter of a BCR (BTB-CUL3-RBX1) E3 ubiquitin-protein ligase complex required for efficient chromosome alignment and cytokinesis. The BCR(KLHL21) E3 ubiquitin ligase complex regulates localization of the chromosomal passenger complex (CPC) from chromosomes to the spindle midzone in anaphase and mediates the ubiquitination of AURKB. Ubiquitination of AURKB by BCR(KLHL21) E3 ubiquitin ligase complex may not lead to its degradation by the proteasome. The sequence is that of Kelch-like protein 21 (KLHL21) from Bos taurus (Bovine).